We begin with the raw amino-acid sequence, 92 residues long: PqqA binding protein (92 aa).

The protein belongs to the PqqD family. As to quaternary structure, monomer. Interacts with PqqE.

The protein operates within cofactor biosynthesis; pyrroloquinoline quinone biosynthesis. In terms of biological role, functions as a PqqA binding protein and presents PqqA to PqqE, in the pyrroloquinoline quinone (PQQ) biosynthetic pathway. The polypeptide is PqqA binding protein (Xanthomonas campestris pv. campestris (strain 8004)).